We begin with the raw amino-acid sequence, 262 residues long: Expansin-A13 (262 aa).

The first 22 residues, 1-22 (MAGVARMLAAVVCAIMPAAAMA), serve as a signal peptide directing secretion. Residues 52–167 (GGACGYGNLY…QRVPCMKKGG (116 aa)) enclose the Expansin-like EG45 domain. One can recognise an Expansin-like CBD domain in the interval 177–257 (YFQLVLLTNV…GWRFGQTFAS (81 aa)).

It belongs to the expansin family. Expansin A subfamily. As to expression, expressed in roots and flowers.

Its subcellular location is the secreted. The protein localises to the cell wall. The protein resides in the membrane. In terms of biological role, may cause loosening and extension of plant cell walls by disrupting non-covalent bonding between cellulose microfibrils and matrix glucans. No enzymatic activity has been found. May be required for rapid internodal elongation in deepwater rice during submergence. The polypeptide is Expansin-A13 (EXPA13) (Oryza sativa subsp. japonica (Rice)).